The chain runs to 145 residues: Large ribosomal subunit protein uL16 (145 aa).

Belongs to the universal ribosomal protein uL16 family. Part of the 50S ribosomal subunit.

Its function is as follows. Binds 23S rRNA and is also seen to make contacts with the A and possibly P site tRNAs. The polypeptide is Large ribosomal subunit protein uL16 (Lachnospira eligens (strain ATCC 27750 / DSM 3376 / VPI C15-48 / C15-B4) (Eubacterium eligens)).